Reading from the N-terminus, the 250-residue chain is tRNA (guanine-N(1)-)-methyltransferase (250 aa).

S-adenosyl-L-methionine is bound by residues Gly-116 and 136–141 (IGDYVL).

Belongs to the RNA methyltransferase TrmD family. Homodimer.

Its subcellular location is the cytoplasm. The catalysed reaction is guanosine(37) in tRNA + S-adenosyl-L-methionine = N(1)-methylguanosine(37) in tRNA + S-adenosyl-L-homocysteine + H(+). Its function is as follows. Specifically methylates guanosine-37 in various tRNAs. This chain is tRNA (guanine-N(1)-)-methyltransferase, found in Pseudomonas syringae pv. tomato (strain ATCC BAA-871 / DC3000).